A 537-amino-acid chain; its full sequence is Putative cysteine ligase BshC (537 aa).

A coiled-coil region spans residues 383-451 (MERTQKLLKQ…EVKENQDNFN (69 aa)).

The protein belongs to the BshC family.

Involved in bacillithiol (BSH) biosynthesis. May catalyze the last step of the pathway, the addition of cysteine to glucosamine malate (GlcN-Mal) to generate BSH. The chain is Putative cysteine ligase BshC from Staphylococcus haemolyticus (strain JCSC1435).